The following is a 125-amino-acid chain: UPF0763 protein NAMH_0545 (125 aa).

The protein belongs to the UPF0763 family.

This chain is UPF0763 protein NAMH_0545, found in Nautilia profundicola (strain ATCC BAA-1463 / DSM 18972 / AmH).